A 473-amino-acid chain; its full sequence is Putative BTB/POZ domain-containing protein R765 (473 aa).

The BTB domain maps to 2 to 72 (TNIQLVIKDD…KIYDREITAD (71 aa)).

Belongs to the mimivirus BTB/WD family.

The polypeptide is Putative BTB/POZ domain-containing protein R765 (Acanthamoeba polyphaga mimivirus (APMV)).